The following is a 390-amino-acid chain: Chorismate synthase (390 aa).

Residue Arg-48 participates in NADP(+) binding. Residues 126 to 128, Gly-286, 301 to 305, and Arg-328 contribute to the FMN site; these read RAS and KPTSS.

This sequence belongs to the chorismate synthase family. FMNH2 serves as cofactor.

It catalyses the reaction 5-O-(1-carboxyvinyl)-3-phosphoshikimate = chorismate + phosphate. Its pathway is metabolic intermediate biosynthesis; chorismate biosynthesis; chorismate from D-erythrose 4-phosphate and phosphoenolpyruvate: step 7/7. Functionally, catalyzes the anti-1,4-elimination of the C-3 phosphate and the C-6 proR hydrogen from 5-enolpyruvylshikimate-3-phosphate (EPSP) to yield chorismate, which is the branch point compound that serves as the starting substrate for the three terminal pathways of aromatic amino acid biosynthesis. This reaction introduces a second double bond into the aromatic ring system. This Sulfurisphaera tokodaii (strain DSM 16993 / JCM 10545 / NBRC 100140 / 7) (Sulfolobus tokodaii) protein is Chorismate synthase.